Reading from the N-terminus, the 98-residue chain is MSVSIKPLEDRIVIQQVEAEQTTASGLVIPDTAKEKPQEGEVVAVGPGRIDDNGNRVPLDVAVGDKVIYSKYGGTEVKYDGQDLLVLSARDVLAVIER.

Belongs to the GroES chaperonin family. In terms of assembly, heptamer of 7 subunits arranged in a ring. Interacts with the chaperonin GroEL.

The protein localises to the cytoplasm. Its function is as follows. Together with the chaperonin GroEL, plays an essential role in assisting protein folding. The GroEL-GroES system forms a nano-cage that allows encapsulation of the non-native substrate proteins and provides a physical environment optimized to promote and accelerate protein folding. GroES binds to the apical surface of the GroEL ring, thereby capping the opening of the GroEL channel. The polypeptide is Co-chaperonin GroES (Clavibacter michiganensis subsp. michiganensis (strain NCPPB 382)).